A 433-amino-acid chain; its full sequence is 3-phosphoshikimate 1-carboxyvinyltransferase (433 aa).

Positions 22, 23, and 27 each coordinate 3-phosphoshikimate. Residue K22 coordinates phosphoenolpyruvate. Phosphoenolpyruvate is bound by residues G95 and R123. 4 residues coordinate 3-phosphoshikimate: S167, Q169, D315, and K342. Residue Q169 participates in phosphoenolpyruvate binding. D315 (proton acceptor) is an active-site residue. Residues R346 and R387 each contribute to the phosphoenolpyruvate site.

This sequence belongs to the EPSP synthase family. As to quaternary structure, monomer.

It is found in the cytoplasm. It carries out the reaction 3-phosphoshikimate + phosphoenolpyruvate = 5-O-(1-carboxyvinyl)-3-phosphoshikimate + phosphate. The protein operates within metabolic intermediate biosynthesis; chorismate biosynthesis; chorismate from D-erythrose 4-phosphate and phosphoenolpyruvate: step 6/7. Functionally, catalyzes the transfer of the enolpyruvyl moiety of phosphoenolpyruvate (PEP) to the 5-hydroxyl of shikimate-3-phosphate (S3P) to produce enolpyruvyl shikimate-3-phosphate and inorganic phosphate. In Legionella pneumophila subsp. pneumophila (strain Philadelphia 1 / ATCC 33152 / DSM 7513), this protein is 3-phosphoshikimate 1-carboxyvinyltransferase.